The following is a 393-amino-acid chain: Riboflavin biosynthesis protein RibBA (393 aa).

Residues 1–200 form a DHBP synthase region; the sequence is MQFDTIELAI…IKSLVAFRKA (200 aa). Residues 27–28, D32, 139–143, and E163 each bind D-ribulose 5-phosphate; these read RE and RNGHT. Mg(2+) is bound at residue E28. A Mg(2+)-binding site is contributed by H142. The interval 201–393 is GTP cyclohydrolase II; that stretch reads VELNVNLKAK…TKKNKMGHLI (193 aa). A GTP-binding site is contributed by 249–253; that stretch reads RMHSA. Positions 254, 265, and 267 each coordinate Zn(2+). GTP-binding positions include Q270, 291-293, and T313; that span reads EGR. The active-site Proton acceptor; for GTP cyclohydrolase activity is the D325. The active-site Nucleophile; for GTP cyclohydrolase activity is R327. GTP contacts are provided by S348 and K353.

This sequence in the N-terminal section; belongs to the DHBP synthase family. It in the C-terminal section; belongs to the GTP cyclohydrolase II family. It depends on Mg(2+) as a cofactor. The cofactor is Mn(2+). Zn(2+) is required as a cofactor.

It catalyses the reaction D-ribulose 5-phosphate = (2S)-2-hydroxy-3-oxobutyl phosphate + formate + H(+). It carries out the reaction GTP + 4 H2O = 2,5-diamino-6-hydroxy-4-(5-phosphoribosylamino)-pyrimidine + formate + 2 phosphate + 3 H(+). The protein operates within cofactor biosynthesis; riboflavin biosynthesis; 2-hydroxy-3-oxobutyl phosphate from D-ribulose 5-phosphate: step 1/1. Its pathway is cofactor biosynthesis; riboflavin biosynthesis; 5-amino-6-(D-ribitylamino)uracil from GTP: step 1/4. Its function is as follows. Catalyzes the conversion of D-ribulose 5-phosphate to formate and 3,4-dihydroxy-2-butanone 4-phosphate. Functionally, catalyzes the conversion of GTP to 2,5-diamino-6-ribosylamino-4(3H)-pyrimidinone 5'-phosphate (DARP), formate and pyrophosphate. The chain is Riboflavin biosynthesis protein RibBA from Staphylococcus epidermidis (strain ATCC 35984 / DSM 28319 / BCRC 17069 / CCUG 31568 / BM 3577 / RP62A).